Reading from the N-terminus, the 387-residue chain is 1,3-propanediol dehydrogenase (387 aa).

It belongs to the iron-containing alcohol dehydrogenase family. Homooctamer. It depends on Fe cation as a cofactor.

It catalyses the reaction propane-1,3-diol + NAD(+) = 3-hydroxypropanal + NADH + H(+). The protein is 1,3-propanediol dehydrogenase (dhaT) of Klebsiella pneumoniae.